The primary structure comprises 93 residues: MLKPLGDRVVLKVEEKEQKVGGFVIAGNGQAATKTAEVVAVGQGIRTLNGELVSLSVKEGEKVLVENHAGVEVKDGDEAYLLVSEANILAVVE.

The protein belongs to the GroES chaperonin family. As to quaternary structure, heptamer of 7 subunits arranged in a ring. Interacts with the chaperonin GroEL.

Its subcellular location is the cytoplasm. Together with the chaperonin GroEL, plays an essential role in assisting protein folding. The GroEL-GroES system forms a nano-cage that allows encapsulation of the non-native substrate proteins and provides a physical environment optimized to promote and accelerate protein folding. GroES binds to the apical surface of the GroEL ring, thereby capping the opening of the GroEL channel. The polypeptide is Co-chaperonin GroES (Streptococcus sanguinis).